Consider the following 91-residue polypeptide: Protein YchS (91 aa).

The chain is Protein YchS (ychS) from Escherichia coli O157:H7.